A 238-amino-acid polypeptide reads, in one-letter code: ATP-dependent dethiobiotin synthetase BioD (238 aa).

13–18 serves as a coordination point for ATP; it reads EIGKTV. T17 is a binding site for Mg(2+). The active site involves K38. T42 is a substrate binding site. Residues R59 and E111 each contribute to the Mg(2+) site. ATP-binding positions include 111–114, 175–176, and 204–206; these read EGAG, NQ, and PLL.

It belongs to the dethiobiotin synthetase family. In terms of assembly, homodimer. Mg(2+) serves as cofactor.

The protein resides in the cytoplasm. The catalysed reaction is (7R,8S)-7,8-diammoniononanoate + CO2 + ATP = (4R,5S)-dethiobiotin + ADP + phosphate + 3 H(+). Its pathway is cofactor biosynthesis; biotin biosynthesis; biotin from 7,8-diaminononanoate: step 1/2. Its function is as follows. Catalyzes a mechanistically unusual reaction, the ATP-dependent insertion of CO2 between the N7 and N8 nitrogen atoms of 7,8-diaminopelargonic acid (DAPA, also called 7,8-diammoniononanoate) to form a ureido ring. The protein is ATP-dependent dethiobiotin synthetase BioD of Geobacillus kaustophilus (strain HTA426).